The following is a 170-amino-acid chain: Adenine phosphoribosyltransferase (170 aa).

This sequence belongs to the purine/pyrimidine phosphoribosyltransferase family. In terms of assembly, homodimer.

It localises to the cytoplasm. It catalyses the reaction AMP + diphosphate = 5-phospho-alpha-D-ribose 1-diphosphate + adenine. The protein operates within purine metabolism; AMP biosynthesis via salvage pathway; AMP from adenine: step 1/1. Functionally, catalyzes a salvage reaction resulting in the formation of AMP, that is energically less costly than de novo synthesis. In Streptococcus pneumoniae (strain Taiwan19F-14), this protein is Adenine phosphoribosyltransferase.